Consider the following 416-residue polypeptide: Serine hydroxymethyltransferase (416 aa).

(6S)-5,6,7,8-tetrahydrofolate-binding positions include Leu-119 and 123–125; that span reads GHL. N6-(pyridoxal phosphate)lysine is present on Lys-228.

Belongs to the SHMT family. As to quaternary structure, homodimer. Pyridoxal 5'-phosphate is required as a cofactor.

The protein localises to the cytoplasm. It carries out the reaction (6R)-5,10-methylene-5,6,7,8-tetrahydrofolate + glycine + H2O = (6S)-5,6,7,8-tetrahydrofolate + L-serine. Its pathway is one-carbon metabolism; tetrahydrofolate interconversion. It functions in the pathway amino-acid biosynthesis; glycine biosynthesis; glycine from L-serine: step 1/1. Catalyzes the reversible interconversion of serine and glycine with tetrahydrofolate (THF) serving as the one-carbon carrier. This reaction serves as the major source of one-carbon groups required for the biosynthesis of purines, thymidylate, methionine, and other important biomolecules. Also exhibits THF-independent aldolase activity toward beta-hydroxyamino acids, producing glycine and aldehydes, via a retro-aldol mechanism. The chain is Serine hydroxymethyltransferase from Moorella thermoacetica (strain ATCC 39073 / JCM 9320).